The chain runs to 277 residues: 4-diphosphocytidyl-2-C-methyl-D-erythritol kinase (277 aa).

K9 is an active-site residue. 91 to 101 (PMGAGLGGGSS) contributes to the ATP binding site. D133 is a catalytic residue.

This sequence belongs to the GHMP kinase family. IspE subfamily.

The enzyme catalyses 4-CDP-2-C-methyl-D-erythritol + ATP = 4-CDP-2-C-methyl-D-erythritol 2-phosphate + ADP + H(+). It participates in isoprenoid biosynthesis; isopentenyl diphosphate biosynthesis via DXP pathway; isopentenyl diphosphate from 1-deoxy-D-xylulose 5-phosphate: step 3/6. In terms of biological role, catalyzes the phosphorylation of the position 2 hydroxy group of 4-diphosphocytidyl-2C-methyl-D-erythritol. In Acinetobacter baumannii (strain AB307-0294), this protein is 4-diphosphocytidyl-2-C-methyl-D-erythritol kinase.